Here is a 62-residue protein sequence, read N- to C-terminus: Small ribosomal subunit protein bS21 (62 aa).

The tract at residues 43-62 is disordered; that stretch reads EKRKRKAMALQKQRKRRSRY. Over residues 44-62 the composition is skewed to basic residues; the sequence is KRKRKAMALQKQRKRRSRY.

Belongs to the bacterial ribosomal protein bS21 family.

The chain is Small ribosomal subunit protein bS21 from Trichodesmium erythraeum (strain IMS101).